A 428-amino-acid polypeptide reads, in one-letter code: Histidine--tRNA ligase (428 aa).

It belongs to the class-II aminoacyl-tRNA synthetase family.

The protein resides in the cytoplasm. It catalyses the reaction tRNA(His) + L-histidine + ATP = L-histidyl-tRNA(His) + AMP + diphosphate + H(+). In Korarchaeum cryptofilum (strain OPF8), this protein is Histidine--tRNA ligase.